The primary structure comprises 218 residues: Redox-sensing transcriptional repressor Rex (218 aa).

The H-T-H motif DNA-binding region spans 25–64; it reads WYLSYVQLLHADGCESVSSTRIARAVGVDASLVAKDLSYV. 99 to 104 serves as a coordination point for NAD(+); sequence GVGSLG.

Belongs to the transcriptional regulatory Rex family. In terms of assembly, homodimer.

The protein resides in the cytoplasm. Its function is as follows. Modulates transcription in response to changes in cellular NADH/NAD(+) redox state. The sequence is that of Redox-sensing transcriptional repressor Rex from Porphyromonas gingivalis (strain ATCC 33277 / DSM 20709 / CIP 103683 / JCM 12257 / NCTC 11834 / 2561).